The chain runs to 269 residues: uncharacterized protein (269 aa).

15-41 (QKSVLITGCSSGIGLESALELKRQGFH) contacts NADP(+). Position 146 (Ser146) interacts with substrate. Tyr159 (proton acceptor) is an active-site residue.

It belongs to the short-chain dehydrogenases/reductases (SDR) family.

This is an uncharacterized protein from Escherichia coli O6:H1 (strain CFT073 / ATCC 700928 / UPEC).